Reading from the N-terminus, the 473-residue chain is Cell division protein FtsP (473 aa).

Positions methionine 1–alanine 27 form a signal peptide, tat-type signal.

This sequence belongs to the FtsP family. Predicted to be exported by the Tat system. The position of the signal peptide cleavage has not been experimentally proven.

It localises to the periplasm. In terms of biological role, cell division protein that is required for growth during stress conditions. May be involved in protecting or stabilizing the divisomal assembly under conditions of stress. This Proteus mirabilis (strain HI4320) protein is Cell division protein FtsP.